A 320-amino-acid polypeptide reads, in one-letter code: Ferrochelatase (320 aa).

Fe cation contacts are provided by H194 and E275.

Belongs to the ferrochelatase family.

It is found in the cytoplasm. The catalysed reaction is heme b + 2 H(+) = protoporphyrin IX + Fe(2+). It functions in the pathway porphyrin-containing compound metabolism; protoheme biosynthesis; protoheme from protoporphyrin-IX: step 1/1. In terms of biological role, catalyzes the ferrous insertion into protoporphyrin IX. The polypeptide is Ferrochelatase (Xylella fastidiosa (strain M23)).